The sequence spans 122 residues: Large ribosomal subunit protein bL12 (122 aa).

The protein belongs to the bacterial ribosomal protein bL12 family. Homodimer. Part of the ribosomal stalk of the 50S ribosomal subunit. Forms a multimeric L10(L12)X complex, where L10 forms an elongated spine to which 2 to 4 L12 dimers bind in a sequential fashion. Binds GTP-bound translation factors.

In terms of biological role, forms part of the ribosomal stalk which helps the ribosome interact with GTP-bound translation factors. Is thus essential for accurate translation. This Staphylococcus aureus (strain Newman) protein is Large ribosomal subunit protein bL12.